The chain runs to 393 residues: Staphopain B (393 aa).

An N-terminal signal peptide occupies residues 1–36 (MNSSCKTRVFNIISIIMVSMLILSLGAFANNNKAKA). Positions 37 to 219 (DSHSKQLEIN…KVEENEAIQE (183 aa)) are excised as a propeptide. Active-site residues include C243, H340, and N360.

The protein belongs to the peptidase C47 family. In terms of assembly, in the cytoplasm, prematurely activated/folded SspB forms a stable non-covalent complex with SspC. In terms of processing, proteolytically cleaved by staphylococcal serine protease (SspA).

Its subcellular location is the secreted. With respect to regulation, prematurely activated/folded staphopain B is inhibited by staphostatin B (SspC), which is probably required to protect staphylococcal cytoplasmic proteins from degradation by SspB. Its function is as follows. Cysteine protease that plays an important role in the inhibition of host innate immune response. Degrades host elastin, fibrogen, fibronectin and kininogen. Blocks phagocytosis of opsonised S.aureus by neutrophils and monocytes by inducing their death in a proteolytic activity-dependent manner. Decreases surface expression of the 'don't eat me' signal CD31 on neutrophils. Cleaves host galectin-3/LGALS3, thereby inhibiting the neutrophil-activating ability of the lectin. The chain is Staphopain B (sspB) from Staphylococcus aureus (strain MRSA252).